The following is a 423-amino-acid chain: Phosphoribosylamine--glycine ligase (423 aa).

The region spanning 107–314 (KAFMAKYNIP…LSDLVEAAID (208 aa)) is the ATP-grasp domain. An ATP-binding site is contributed by 133 to 194 (VNQKGAPIVI…EDFLQGEEAS (62 aa)). Mg(2+)-binding residues include Glu-284 and Asn-286.

This sequence belongs to the GARS family. It depends on Mg(2+) as a cofactor. Mn(2+) serves as cofactor.

The catalysed reaction is 5-phospho-beta-D-ribosylamine + glycine + ATP = N(1)-(5-phospho-beta-D-ribosyl)glycinamide + ADP + phosphate + H(+). It functions in the pathway purine metabolism; IMP biosynthesis via de novo pathway; N(1)-(5-phospho-D-ribosyl)glycinamide from 5-phospho-alpha-D-ribose 1-diphosphate: step 2/2. The chain is Phosphoribosylamine--glycine ligase from Neisseria meningitidis serogroup B (strain ATCC BAA-335 / MC58).